We begin with the raw amino-acid sequence, 466 residues long: CCA-adding enzyme (466 aa).

Residues serine 55 and arginine 58 each coordinate ATP. Positions 55 and 58 each coordinate CTP. Residues aspartate 67, aspartate 69, and aspartate 118 each coordinate Mg(2+). Residues histidine 141, lysine 161, and tyrosine 170 each coordinate ATP. CTP contacts are provided by histidine 141, lysine 161, and tyrosine 170.

Belongs to the tRNA nucleotidyltransferase/poly(A) polymerase family. Archaeal CCA-adding enzyme subfamily. As to quaternary structure, homodimer. The cofactor is Mg(2+).

It catalyses the reaction a tRNA precursor + 2 CTP + ATP = a tRNA with a 3' CCA end + 3 diphosphate. The enzyme catalyses a tRNA with a 3' CCA end + 2 CTP + ATP = a tRNA with a 3' CCACCA end + 3 diphosphate. Catalyzes the addition and repair of the essential 3'-terminal CCA sequence in tRNAs without using a nucleic acid template. Adds these three nucleotides in the order of C, C, and A to the tRNA nucleotide-73, using CTP and ATP as substrates and producing inorganic pyrophosphate. tRNA 3'-terminal CCA addition is required both for tRNA processing and repair. Also involved in tRNA surveillance by mediating tandem CCA addition to generate a CCACCA at the 3' terminus of unstable tRNAs. While stable tRNAs receive only 3'-terminal CCA, unstable tRNAs are marked with CCACCA and rapidly degraded. The chain is CCA-adding enzyme from Haloarcula marismortui (strain ATCC 43049 / DSM 3752 / JCM 8966 / VKM B-1809) (Halobacterium marismortui).